The chain runs to 174 residues: uncharacterized protein (174 aa).

The disordered stretch occupies residues 78 to 97 (TFGRNIKTPDISNPTRARNE).

It to yeast YMR295c.

This is an uncharacterized protein from Saccharomyces cerevisiae (strain ATCC 204508 / S288c) (Baker's yeast).